Here is a 372-residue protein sequence, read N- to C-terminus: MAKKRVVIGMSGGVDSSVSAWLLKEQGYEVIGLFMKNWEDDDDSEYCSTRQDWIDAASVADVVGVDIEAVNFAAEYKDRVFAEFLREYEAGRTPNPDVLCNAEIKFKAFLDHAMLLGADMIATGHYARVREVTSGPDAGQVQLLKAVDASKDQSYFLHRLNQAQLSKTLFPLGEIRKTEVRKIAEQLQLPNASKKDSTGICFIGERPFREFLNRYLSYQPGPMKTPDGTIVGEHVGLSFYTLGQRKGIGLGGMKTHKNTDGNSGPWYVARKDVANNTLYIVQGHDHPWLLSSALSAGQMSWVAGRAPSEELVAAKTRYRQADVACSQHATADNLALAFDTPQWAVTPGQSAVLYQGDVCLGGGIITASTLTE.

ATP-binding positions include 9–16 (GMSGGVDS) and Met-35. The interval 95–97 (NPD) is interaction with target base in tRNA. The active-site Nucleophile is the Cys-100. Cys-100 and Cys-201 are oxidised to a cystine. Residue Gly-124 participates in ATP binding. An interaction with tRNA region spans residues 151–153 (KDQ). Cys-201 acts as the Cysteine persulfide intermediate in catalysis. Residues 317–318 (RY) are interaction with tRNA.

Belongs to the MnmA/TRMU family.

The protein resides in the cytoplasm. The catalysed reaction is S-sulfanyl-L-cysteinyl-[protein] + uridine(34) in tRNA + AH2 + ATP = 2-thiouridine(34) in tRNA + L-cysteinyl-[protein] + A + AMP + diphosphate + H(+). Its function is as follows. Catalyzes the 2-thiolation of uridine at the wobble position (U34) of tRNA, leading to the formation of s(2)U34. In Herminiimonas arsenicoxydans, this protein is tRNA-specific 2-thiouridylase MnmA.